The sequence spans 117 residues: Large ribosomal subunit protein bL20c (117 aa).

It belongs to the bacterial ribosomal protein bL20 family.

The protein localises to the plastid. It localises to the chloroplast. In terms of biological role, binds directly to 23S ribosomal RNA and is necessary for the in vitro assembly process of the 50S ribosomal subunit. It is not involved in the protein synthesizing functions of that subunit. This is Large ribosomal subunit protein bL20c from Gossypium hirsutum (Upland cotton).